We begin with the raw amino-acid sequence, 1018 residues long: Calcium-transporting ATPase sarcoplasmic/endoplasmic reticulum type (1018 aa).

Topologically, residues 1-48 are cytoplasmic; it reads MEDGHSKTVDEVLSHFRVDPERGLSLDQVKEYQKKYGPNELPAEEGKT. Residues 49–69 form a helical membrane-spanning segment; sequence LWQLVLEQFDDLLVKILLLAA. Residues 70–88 lie on the Lumenal side of the membrane; sequence IISFVLALFEEHEGVEAFV. A helical membrane pass occupies residues 89 to 109; sequence EPFVILLILIANAVVGVWQER. Over 110–252 the chain is Cytoplasmic; it reads NAESAIEALK…EIKTPLQQKL (143 aa). Residues 253–272 form a helical membrane-spanning segment; the sequence is DEFGEQLSKVISLICVAVWA. Topologically, residues 273–294 are lumenal; sequence INIGHFNDPAHGGSWIKGAVYY. A helical membrane pass occupies residues 295–312; that stretch reads FKIAVALAVAAIPEGLPA. Ca(2+)-binding residues include V303, A304, I306, and E308. The Cytoplasmic segment spans residues 313-756; it reads VITTCLALGT…EEGRAIYNNM (444 aa). D350 acts as the 4-aspartylphosphate intermediate in catalysis. D702 and D706 together coordinate Mg(2+). Residues 757 to 776 form a helical membrane-spanning segment; it reads KQFIRYLISSNIGEVVSIFL. Ca(2+)-binding residues include N767 and E770. Residues 777-786 lie on the Lumenal side of the membrane; that stretch reads TAALGLPEAL. A helical transmembrane segment spans residues 787-807; that stretch reads IPVQLLWVNLVTDGLPATALG. Ca(2+) contacts are provided by N795, T798, and D799. The Cytoplasmic portion of the chain corresponds to 808–827; it reads FNPPDLDIMTKPPRKADEGL. Residues 828–850 traverse the membrane as a helical segment; it reads ISGWLFFRYMAIGGYVGCATVGG. Residues 851–896 are Lumenal-facing; the sequence is AAWWFMFSETGPQLSYWQLTHHLSCLGGGEEFKGIDCKIFNDPHPM. Residues 897-916 form a helical membrane-spanning segment; it reads TMALSVLVTIEMLNAMNSLS. E907 lines the Ca(2+) pocket. Residues 917–929 are Cytoplasmic-facing; sequence ENQSLVQMPPWCN. A helical membrane pass occupies residues 930 to 948; it reads IWLIASMCLSFALHFVILY. Residues 949–963 lie on the Lumenal side of the membrane; that stretch reads VDVLSTVFQVTPLDG. A helical membrane pass occupies residues 964 to 984; the sequence is NEWMTVMKFSLPVVLLDEILK. The Cytoplasmic portion of the chain corresponds to 985 to 1018; sequence FVARRISDGESYIKNMHGLVLAWAVFFAYIIWGP.

It belongs to the cation transport ATPase (P-type) (TC 3.A.3) family.

It localises to the endoplasmic reticulum membrane. The protein localises to the sarcoplasmic reticulum membrane. The catalysed reaction is Ca(2+)(in) + ATP + H2O = Ca(2+)(out) + ADP + phosphate + H(+). This magnesium-dependent enzyme catalyzes the hydrolysis of ATP coupled with the transport of calcium. This Anopheles gambiae (African malaria mosquito) protein is Calcium-transporting ATPase sarcoplasmic/endoplasmic reticulum type.